The sequence spans 20 residues: Unknown protein from 2D-PAGE of needles (20 aa).

The sequence is that of Unknown protein from 2D-PAGE of needles from Pinus pinaster (Maritime pine).